The sequence spans 1201 residues: DNA-directed RNA polymerase subunit beta' (1201 aa).

Residues cysteine 60, cysteine 62, cysteine 75, and cysteine 78 each contribute to the Zn(2+) site. The Mg(2+) site is built by aspartate 449, aspartate 451, and aspartate 453. 4 residues coordinate Zn(2+): cysteine 818, cysteine 892, cysteine 899, and cysteine 902.

The protein belongs to the RNA polymerase beta' chain family. The RNAP catalytic core consists of 2 alpha, 1 beta, 1 beta' and 1 omega subunit. When a sigma factor is associated with the core the holoenzyme is formed, which can initiate transcription. It depends on Mg(2+) as a cofactor. Zn(2+) serves as cofactor.

It carries out the reaction RNA(n) + a ribonucleoside 5'-triphosphate = RNA(n+1) + diphosphate. In terms of biological role, DNA-dependent RNA polymerase catalyzes the transcription of DNA into RNA using the four ribonucleoside triphosphates as substrates. This Listeria innocua serovar 6a (strain ATCC BAA-680 / CLIP 11262) protein is DNA-directed RNA polymerase subunit beta'.